Here is a 47-residue protein sequence, read N- to C-terminus: Mu-theraphotoxin-An1a (47 aa).

3 cysteine pairs are disulfide-bonded: cysteine 4–cysteine 34, cysteine 8–cysteine 39, and cysteine 22–cysteine 44.

Post-translationally, contains 3 disulfide bonds. Expressed by the venom gland.

Its subcellular location is the secreted. Functionally, is toxic to insects. Reduces amplitude and frequency of spontaneous firing and inhibits voltage-gated sodium current (Nav) in the dorsal unpaired median (DUM) neurons of P.americana. This chain is Mu-theraphotoxin-An1a, found in Acanthoscurria natalensis (Tarantula spider).